A 493-amino-acid polypeptide reads, in one-letter code: Dipeptide permease D (493 aa).

13 helical membrane passes run 14-34 (VVALQIWEYFSFYGMRALLIL), 49-69 (ELFSAYCSLVYVTPILGGYLA), 91-111 (LVLGASEIAPTFLYLSLAIIV), 138-158 (GGFSLLYAAGNIGSIVAPIAC), 167-187 (WAMGFALAAIGMLAGLVIFLC), 212-232 (NWGWLLILLVAAPLLITVLFW), 235-255 (WSVYALIVATAISLVVLAKIY), 267-287 (LGLIVTLTLFSMLFWAFAQQG), 312-332 (MFQSVNAFAVMLCGVVLAWLV), 344-364 (IWGKFALGLGLMSAGFCILTL), 379-399 (LMVLGLAVMGFAELFIDPVAM), 413-433 (VLTGIYMLLSGAIANYLAGVI), and 458-478 (VFEQITWGALACVGVVLLIWL).

This sequence belongs to the major facilitator superfamily. Proton-dependent oligopeptide transporter (POT/PTR) (TC 2.A.17) family. DtpD subfamily.

It localises to the cell inner membrane. In terms of biological role, probable proton-dependent permease that transports dipeptides. In Salmonella paratyphi C (strain RKS4594), this protein is Dipeptide permease D.